The primary structure comprises 108 residues: Protein YcgL (108 aa).

The region spanning 12 to 96 (MFCVIYRSSK…PPEDLLKQHL (85 aa)) is the YcgL domain.

The protein is Protein YcgL of Escherichia coli O17:K52:H18 (strain UMN026 / ExPEC).